The chain runs to 355 residues: D-alanine--D-alanine ligase (355 aa).

The ATP-grasp domain maps to 143–350 (KTIFSNHKLP…IEQLVAKLVD (208 aa)). Residue 178-233 (LKKLKFPVFVKPSNSGSSLGISKVKNESEILLALEKAWGIDPRILIEEGLEVREIE) coordinates ATP. Aspartate 303, glutamate 317, and asparagine 319 together coordinate Mg(2+).

This sequence belongs to the D-alanine--D-alanine ligase family. Mg(2+) is required as a cofactor. It depends on Mn(2+) as a cofactor.

The protein localises to the cytoplasm. It catalyses the reaction 2 D-alanine + ATP = D-alanyl-D-alanine + ADP + phosphate + H(+). It participates in cell wall biogenesis; peptidoglycan biosynthesis. Cell wall formation. In Prochlorococcus marinus (strain MIT 9301), this protein is D-alanine--D-alanine ligase.